We begin with the raw amino-acid sequence, 231 residues long: 7-cyano-7-deazaguanine synthase (231 aa).

Position 8 to 18 (8 to 18) interacts with ATP; the sequence is FSGGQDSTTCL. C188, C197, C200, and C203 together coordinate Zn(2+).

It belongs to the QueC family. The cofactor is Zn(2+).

It carries out the reaction 7-carboxy-7-deazaguanine + NH4(+) + ATP = 7-cyano-7-deazaguanine + ADP + phosphate + H2O + H(+). It functions in the pathway purine metabolism; 7-cyano-7-deazaguanine biosynthesis. In terms of biological role, catalyzes the ATP-dependent conversion of 7-carboxy-7-deazaguanine (CDG) to 7-cyano-7-deazaguanine (preQ(0)). In Citrobacter koseri (strain ATCC BAA-895 / CDC 4225-83 / SGSC4696), this protein is 7-cyano-7-deazaguanine synthase.